Reading from the N-terminus, the 309-residue chain is Ferrochelatase (309 aa).

H185 and E262 together coordinate Fe cation.

The protein belongs to the ferrochelatase family.

The protein localises to the cytoplasm. The catalysed reaction is heme b + 2 H(+) = protoporphyrin IX + Fe(2+). It functions in the pathway porphyrin-containing compound metabolism; protoheme biosynthesis; protoheme from protoporphyrin-IX: step 1/1. In terms of biological role, catalyzes the ferrous insertion into protoporphyrin IX. The protein is Ferrochelatase of Campylobacter jejuni subsp. jejuni serotype O:23/36 (strain 81-176).